Here is a 209-residue protein sequence, read N- to C-terminus: Nucleoside triphosphate pyrophosphatase (209 aa).

D79 serves as the catalytic Proton acceptor.

This sequence belongs to the Maf family. A divalent metal cation serves as cofactor.

It is found in the cytoplasm. It carries out the reaction a ribonucleoside 5'-triphosphate + H2O = a ribonucleoside 5'-phosphate + diphosphate + H(+). The enzyme catalyses a 2'-deoxyribonucleoside 5'-triphosphate + H2O = a 2'-deoxyribonucleoside 5'-phosphate + diphosphate + H(+). Its function is as follows. Nucleoside triphosphate pyrophosphatase. May have a dual role in cell division arrest and in preventing the incorporation of modified nucleotides into cellular nucleic acids. The sequence is that of Nucleoside triphosphate pyrophosphatase from Mycolicibacterium gilvum (strain PYR-GCK) (Mycobacterium gilvum (strain PYR-GCK)).